Consider the following 556-residue polypeptide: Formate--tetrahydrofolate ligase (556 aa).

ATP is bound at residue 65 to 72; the sequence is TPAGEGKS.

The protein belongs to the formate--tetrahydrofolate ligase family.

It catalyses the reaction (6S)-5,6,7,8-tetrahydrofolate + formate + ATP = (6R)-10-formyltetrahydrofolate + ADP + phosphate. The protein operates within one-carbon metabolism; tetrahydrofolate interconversion. The chain is Formate--tetrahydrofolate ligase from Streptococcus equi subsp. equi (strain 4047).